The primary structure comprises 100 residues: MSGKTLTRMDLSEAVFREVGLSRNESSELVERVLQLMSDALVDGEQVKVSSFGTFSVRSKTARVGRNPKTGEEVPISPRRVLTFRPSHLMKDRVAAGNRS.

It belongs to the bacterial histone-like protein family. In terms of assembly, heterodimer of an alpha and a beta chain.

Functionally, this protein is one of the two subunits of integration host factor, a specific DNA-binding protein that functions in genetic recombination as well as in transcriptional and translational control. This is Integration host factor subunit alpha from Jannaschia sp. (strain CCS1).